Consider the following 689-residue polypeptide: Elongation factor G 1 (689 aa).

Residues 7-282 (DQVRTIGIIS…AVVDFLPSPL (276 aa)) form the tr-type G domain. GTP contacts are provided by residues 16-23 (SHIDAGKT), 80-84 (DTPGH), and 134-137 (NKMD).

It belongs to the TRAFAC class translation factor GTPase superfamily. Classic translation factor GTPase family. EF-G/EF-2 subfamily.

It is found in the cytoplasm. Its function is as follows. Catalyzes the GTP-dependent ribosomal translocation step during translation elongation. During this step, the ribosome changes from the pre-translocational (PRE) to the post-translocational (POST) state as the newly formed A-site-bound peptidyl-tRNA and P-site-bound deacylated tRNA move to the P and E sites, respectively. Catalyzes the coordinated movement of the two tRNA molecules, the mRNA and conformational changes in the ribosome. The sequence is that of Elongation factor G 1 from Geobacter sulfurreducens (strain ATCC 51573 / DSM 12127 / PCA).